The chain runs to 388 residues: Proline-rich protein 5 (388 aa).

2 interaction with RICTOR regions span residues 10–95 (MSSP…LTKG) and 188–218 (HESR…YGLH). The segment at 12-31 (SPSLSDLGKREPAAAADERG) is disordered. Basic and acidic residues predominate over residues 18–31 (LGKREPAAAADERG). Ser252 is subject to Phosphoserine. Residues 254–388 (SYNTPLLNPV…EGSGGRQSVV (135 aa)) form a disordered region. Residues 336 to 346 (TRSSLPRSSPE) are compositionally biased toward polar residues.

It belongs to the PROTOR family. In terms of assembly, associated component of the mechanistic target of rapamycin complex 2 (mTORC2). Binds directly to MTOR and RICTOR within the TORC2 complex. In terms of tissue distribution, most abundant in kidney and liver. Also highly expressed in brain, spleen, testis and placenta. Overexpressed in several colorectal tumors.

Functionally, associated subunit of mTORC2, which regulates cell growth and survival in response to hormonal signals. mTORC2 is activated by growth factors, but, in contrast to mTORC1, seems to be nutrient-insensitive. mTORC2 seems to function upstream of Rho GTPases to regulate the actin cytoskeleton, probably by activating one or more Rho-type guanine nucleotide exchange factors. PRR5 plays an important role in regulation of PDGFRB expression and in modulation of platelet-derived growth factor signaling. May act as a tumor suppressor in breast cancer. This chain is Proline-rich protein 5 (PRR5), found in Homo sapiens (Human).